The following is a 469-amino-acid chain: UDP-N-acetylmuramoylalanine--D-glutamate ligase (469 aa).

121–127 is a binding site for ATP; sequence GTNGKST.

Belongs to the MurCDEF family.

It localises to the cytoplasm. The catalysed reaction is UDP-N-acetyl-alpha-D-muramoyl-L-alanine + D-glutamate + ATP = UDP-N-acetyl-alpha-D-muramoyl-L-alanyl-D-glutamate + ADP + phosphate + H(+). It functions in the pathway cell wall biogenesis; peptidoglycan biosynthesis. In terms of biological role, cell wall formation. Catalyzes the addition of glutamate to the nucleotide precursor UDP-N-acetylmuramoyl-L-alanine (UMA). The protein is UDP-N-acetylmuramoylalanine--D-glutamate ligase of Rhodopseudomonas palustris (strain ATCC BAA-98 / CGA009).